A 197-amino-acid polypeptide reads, in one-letter code: Recombination protein RecR (197 aa).

Residues 57 to 72 form a C4-type zinc finger; the sequence is CSVCFGITEEDPCRLC. The Toprim domain maps to 79-174; it reads TSLCVVEEPQ…RVTRLAHGIP (96 aa).

Belongs to the RecR family.

Its function is as follows. May play a role in DNA repair. It seems to be involved in an RecBC-independent recombinational process of DNA repair. It may act with RecF and RecO. In Geobacter metallireducens (strain ATCC 53774 / DSM 7210 / GS-15), this protein is Recombination protein RecR.